A 269-amino-acid chain; its full sequence is Tryptophan synthase alpha chain (269 aa).

Active-site proton acceptor residues include Glu-49 and Asp-60.

Belongs to the TrpA family. Tetramer of two alpha and two beta chains.

It catalyses the reaction (1S,2R)-1-C-(indol-3-yl)glycerol 3-phosphate + L-serine = D-glyceraldehyde 3-phosphate + L-tryptophan + H2O. It participates in amino-acid biosynthesis; L-tryptophan biosynthesis; L-tryptophan from chorismate: step 5/5. The alpha subunit is responsible for the aldol cleavage of indoleglycerol phosphate to indole and glyceraldehyde 3-phosphate. This is Tryptophan synthase alpha chain from Delftia acidovorans (strain DSM 14801 / SPH-1).